A 200-amino-acid polypeptide reads, in one-letter code: Large ribosomal subunit protein uL4 (200 aa).

The tract at residues 45–64 is disordered; sequence QKTRAEVSGGGIKPWRQKGT.

It belongs to the universal ribosomal protein uL4 family. Part of the 50S ribosomal subunit.

Its function is as follows. One of the primary rRNA binding proteins, this protein initially binds near the 5'-end of the 23S rRNA. It is important during the early stages of 50S assembly. It makes multiple contacts with different domains of the 23S rRNA in the assembled 50S subunit and ribosome. Functionally, forms part of the polypeptide exit tunnel. The polypeptide is Large ribosomal subunit protein uL4 (Psychrobacter cryohalolentis (strain ATCC BAA-1226 / DSM 17306 / VKM B-2378 / K5)).